Here is a 187-residue protein sequence, read N- to C-terminus: GMP synthase [glutamine-hydrolyzing] subunit A (187 aa).

The Glutamine amidotransferase type-1 domain maps to methionine 1 to leucine 187. The Nucleophile role is filled by cysteine 76. Residues histidine 164 and glutamate 166 contribute to the active site.

In terms of assembly, heterodimer composed of a glutamine amidotransferase subunit (A) and a GMP-binding subunit (B).

The catalysed reaction is XMP + L-glutamine + ATP + H2O = GMP + L-glutamate + AMP + diphosphate + 2 H(+). Its pathway is purine metabolism; GMP biosynthesis; GMP from XMP (L-Gln route): step 1/1. Functionally, catalyzes the synthesis of GMP from XMP. This is GMP synthase [glutamine-hydrolyzing] subunit A from Methanopyrus kandleri (strain AV19 / DSM 6324 / JCM 9639 / NBRC 100938).